The sequence spans 448 residues: UDP-N-acetylmuramoylalanine--D-glutamate ligase (448 aa).

Residue 112-118 (GSNAKST) participates in ATP binding.

The protein belongs to the MurCDEF family.

The protein localises to the cytoplasm. It carries out the reaction UDP-N-acetyl-alpha-D-muramoyl-L-alanine + D-glutamate + ATP = UDP-N-acetyl-alpha-D-muramoyl-L-alanyl-D-glutamate + ADP + phosphate + H(+). Its pathway is cell wall biogenesis; peptidoglycan biosynthesis. Functionally, cell wall formation. Catalyzes the addition of glutamate to the nucleotide precursor UDP-N-acetylmuramoyl-L-alanine (UMA). This is UDP-N-acetylmuramoylalanine--D-glutamate ligase from Acinetobacter baumannii (strain AB307-0294).